The following is a 244-amino-acid chain: tRNA (guanine-N(1)-)-methyltransferase (244 aa).

S-adenosyl-L-methionine-binding positions include glycine 112 and 132–137; that span reads IGDYIL.

It belongs to the RNA methyltransferase TrmD family. In terms of assembly, homodimer.

The protein localises to the cytoplasm. The catalysed reaction is guanosine(37) in tRNA + S-adenosyl-L-methionine = N(1)-methylguanosine(37) in tRNA + S-adenosyl-L-homocysteine + H(+). Specifically methylates guanosine-37 in various tRNAs. The chain is tRNA (guanine-N(1)-)-methyltransferase from Geobacillus kaustophilus (strain HTA426).